Consider the following 445-residue polypeptide: SVP1-like protein 2 (445 aa).

2 WD repeats span residues 218 to 258 and 263 to 302; these read AHKA…LLKE and LDRAEIYDMCFSPLGTRLAVVSDKQTLHVFQIAPMAEGTL. The segment at 301–321 is disordered; it reads TLNPANPEDHQSSGSNGHIKA. Over residues 312–321 the composition is skewed to polar residues; the sequence is SSGSNGHIKA.

The protein belongs to the WD repeat PROPPIN family.

It is found in the vacuole membrane. Its subcellular location is the cytoplasmic vesicle membrane. Its function is as follows. Involved in mitochondrial or peroxisomal functions and amino acid signaling pathways. This chain is SVP1-like protein 2 (HSV2), found in Candida glabrata (strain ATCC 2001 / BCRC 20586 / JCM 3761 / NBRC 0622 / NRRL Y-65 / CBS 138) (Yeast).